Here is a 407-residue protein sequence, read N- to C-terminus: Phosphopentomutase (407 aa).

Positions 10, 306, 311, 347, 348, and 359 each coordinate Mn(2+).

Belongs to the phosphopentomutase family. The cofactor is Mn(2+).

It is found in the cytoplasm. It catalyses the reaction 2-deoxy-alpha-D-ribose 1-phosphate = 2-deoxy-D-ribose 5-phosphate. The enzyme catalyses alpha-D-ribose 1-phosphate = D-ribose 5-phosphate. It participates in carbohydrate degradation; 2-deoxy-D-ribose 1-phosphate degradation; D-glyceraldehyde 3-phosphate and acetaldehyde from 2-deoxy-alpha-D-ribose 1-phosphate: step 1/2. Isomerase that catalyzes the conversion of deoxy-ribose 1-phosphate (dRib-1-P) and ribose 1-phosphate (Rib-1-P) to deoxy-ribose 5-phosphate (dRib-5-P) and ribose 5-phosphate (Rib-5-P), respectively. This chain is Phosphopentomutase, found in Yersinia enterocolitica serotype O:8 / biotype 1B (strain NCTC 13174 / 8081).